The following is a 412-amino-acid chain: Serine hydroxymethyltransferase (412 aa).

(6S)-5,6,7,8-tetrahydrofolate contacts are provided by residues Leu-117 and Gly-121–Leu-123. The residue at position 226 (Lys-226) is an N6-(pyridoxal phosphate)lysine. Residues Glu-242 and Ser-350–Phe-352 contribute to the (6S)-5,6,7,8-tetrahydrofolate site.

This sequence belongs to the SHMT family. As to quaternary structure, homodimer. It depends on pyridoxal 5'-phosphate as a cofactor.

It localises to the cytoplasm. It carries out the reaction (6R)-5,10-methylene-5,6,7,8-tetrahydrofolate + glycine + H2O = (6S)-5,6,7,8-tetrahydrofolate + L-serine. The protein operates within one-carbon metabolism; tetrahydrofolate interconversion. It participates in amino-acid biosynthesis; glycine biosynthesis; glycine from L-serine: step 1/1. Catalyzes the reversible interconversion of serine and glycine with tetrahydrofolate (THF) serving as the one-carbon carrier. Also exhibits THF-independent aldolase activity toward beta-hydroxyamino acids, producing glycine and aldehydes, via a retro-aldol mechanism. The protein is Serine hydroxymethyltransferase of Methanosarcina mazei (strain ATCC BAA-159 / DSM 3647 / Goe1 / Go1 / JCM 11833 / OCM 88) (Methanosarcina frisia).